The primary structure comprises 353 residues: MSEILHIQTATSNYPIHIGILPHIEYAHKVLLVSNPKVAGLHLKYVLERIKAPEVYVCIVPDGEQYKDMKSIEYILECAFTHRLDRKSLMIALGGGVIGDMVGFASGIYQRGIDFIQIPTTLLAQVDASVGGKTGINNTFGKNLIGLFHQPKAVYIDPFMLSTLPKREFGAGVAEIIKMAVCFDEAFFILLQEQILSINDNDFLTRAIAKSVAIKAQVVNADEKEQGIRAALNYGHTFGHIIENLTQYSQFLHGEAVSIGMCMANALSCKLGLLTKEQKDAISALLERYDLPTHFYIQNALDFYEKFSLDKKSVNAKIMFVLPCGIGNVSLRNDVPKADVLDVLSSFSKDSGK.

NAD(+) is bound by residues 62–67 (DGEQYK), 96–100 (GVIGD), 120–121 (TT), Lys-133, and Lys-142. Zn(2+) is bound by residues Glu-175, His-236, and His-253.

This sequence belongs to the sugar phosphate cyclases superfamily. Dehydroquinate synthase family. The cofactor is NAD(+). Co(2+) serves as cofactor. Requires Zn(2+) as cofactor.

Its subcellular location is the cytoplasm. It catalyses the reaction 7-phospho-2-dehydro-3-deoxy-D-arabino-heptonate = 3-dehydroquinate + phosphate. The protein operates within metabolic intermediate biosynthesis; chorismate biosynthesis; chorismate from D-erythrose 4-phosphate and phosphoenolpyruvate: step 2/7. In terms of biological role, catalyzes the conversion of 3-deoxy-D-arabino-heptulosonate 7-phosphate (DAHP) to dehydroquinate (DHQ). The protein is 3-dehydroquinate synthase of Helicobacter hepaticus (strain ATCC 51449 / 3B1).